The primary structure comprises 28 residues: Conotoxin Cl9b (28 aa).

2 positions are modified to 4-hydroxyproline: Pro17 and Pro28.

Post-translationally, contains 3 disulfide bonds. In terms of tissue distribution, expressed by the venom duct.

The protein resides in the secreted. This is Conotoxin Cl9b from Californiconus californicus (California cone).